A 268-amino-acid polypeptide reads, in one-letter code: tRNA pseudouridine synthase A (268 aa).

Asp52 (nucleophile) is an active-site residue. Tyr110 is a substrate binding site.

The protein belongs to the tRNA pseudouridine synthase TruA family. As to quaternary structure, homodimer.

The catalysed reaction is uridine(38/39/40) in tRNA = pseudouridine(38/39/40) in tRNA. In terms of biological role, formation of pseudouridine at positions 38, 39 and 40 in the anticodon stem and loop of transfer RNAs. The sequence is that of tRNA pseudouridine synthase A from Prochlorococcus marinus (strain MIT 9215).